Reading from the N-terminus, the 623-residue chain is E3 ubiquitin-protein ligase DTX1 (623 aa).

2 consecutive WWE domains span residues 13–93 (HNFG…PVRR) and 94–170 (NFFE…RLRR). The interval 224 to 319 (KVPSGPPPAL…RASIPPGVPA (96 aa)) is disordered. The segment covering 227-242 (SGPPPALPPPPPPPIH) has biased composition (pro residues). Residues 292–311 (GQNNLNRPGEQRTSGSSSRA) show a composition bias toward polar residues. Residues 413–474 (CTICMERLVT…DGSLQCPTCK (62 aa)) form an RING-type zinc finger.

This sequence belongs to the Deltex family. As to quaternary structure, may form a homo- or heterodimer with other members of the Deltex family. Probably interacts with Notch1. In terms of tissue distribution, specifically expressed in regions undergoing neuronal differentiation. Mainly colocalizes with Notch1.

It catalyses the reaction S-ubiquitinyl-[E2 ubiquitin-conjugating enzyme]-L-cysteine + [acceptor protein]-L-lysine = [E2 ubiquitin-conjugating enzyme]-L-cysteine + N(6)-ubiquitinyl-[acceptor protein]-L-lysine.. The protein operates within protein modification; protein ubiquitination. Its function is as follows. Regulator of Notch signaling, a signaling pathway involved in cell-cell communications that regulates a broad spectrum of cell-fate determinations. Probably acts both as a positive and negative regulator of Notch, depending on the developmental and cell context. Functions as a ubiquitin ligase protein in vivo, mediating ubiquitination and promoting degradation of MEKK1, suggesting that it may regulate the Notch pathway via some ubiquitin ligase activity. This is E3 ubiquitin-protein ligase DTX1 (dtx1) from Xenopus laevis (African clawed frog).